The following is a 301-amino-acid chain: uncharacterized protein (301 aa).

3 residues coordinate a divalent metal cation: E146, E148, and D177.

The protein belongs to the FAH family.

This is an uncharacterized protein from Staphylococcus saprophyticus subsp. saprophyticus (strain ATCC 15305 / DSM 20229 / NCIMB 8711 / NCTC 7292 / S-41).